A 259-amino-acid polypeptide reads, in one-letter code: Eukaryotic translation initiation factor 3 subunit G-2 (259 aa).

An RRM domain is found at 179 to 257; the sequence is SAVRISNLSE…LILSVEWSKP (79 aa).

This sequence belongs to the eIF-3 subunit G family. As to quaternary structure, component of the eukaryotic translation initiation factor 3 (eIF-3) complex. The eIF-3 complex interacts with pix.

The protein resides in the cytoplasm. Functionally, RNA-binding component of the eukaryotic translation initiation factor 3 (eIF-3) complex, which is involved in protein synthesis of a specialized repertoire of mRNAs and, together with other initiation factors, stimulates binding of mRNA and methionyl-tRNAi to the 40S ribosome. The eIF-3 complex specifically targets and initiates translation of a subset of mRNAs involved in cell proliferation. This subunit can bind 18S rRNA. The polypeptide is Eukaryotic translation initiation factor 3 subunit G-2 (Drosophila virilis (Fruit fly)).